Here is a 328-residue protein sequence, read N- to C-terminus: Zinc transporter ZIP13 (328 aa).

The Lumenal segment spans residues 1–7 (MPGCPCP). Residues 8 to 28 (GCGMAGPRLLFLTALALELLG) form a helical membrane-spanning segment. At 29–68 (RAGGSQPALRSRGTATACRLDNKESESWGALLSGERLDTW) the chain is on the cytoplasmic side. A helical membrane pass occupies residues 69-89 (ICSLLGSLMVGLSGVFPLLVI). At 90–108 (PLEMGTMLRSEAGAWHLKQ) the chain is on the lumenal side. Residues 109 to 129 (LLSFALGGLLGNVFLHLLPEA) form a helical membrane-spanning segment. Topologically, residues 130–149 (WAYTCSASPGGEGQSLQQQQ) are cytoplasmic. The chain crosses the membrane as a helical span at residues 150 to 170 (QLGLWVIAGILTFLALEKMFL). The Lumenal portion of the chain corresponds to 171 to 199 (DSKEEGTSQVSGYLNLLANTIDNFTHGLA). Residues 200–220 (VAASFLVSKKIGLLTTMAILL) traverse the membrane as a helical segment. The XEXPHE-motif motif lies at 221–226 (HEIPHE). At 221 to 242 (HEIPHEVGDFAILLRAGFDRWS) the chain is on the cytoplasmic side. Residues 243–263 (AAKLQLSTALGGLLGAGFAIC) traverse the membrane as a helical segment. The Lumenal segment spans residues 264-273 (TQSPKGVEET). The helical transmembrane segment at 274-294 (AAWVLPFTSGGFLYIALVNVL) threads the bilayer. Residues 295–306 (PDLLEEEDPWRS) are Cytoplasmic-facing. Residues 307 to 327 (LQQLLLLCAGIVVMVLFSLFV) form a helical membrane-spanning segment. Position 328 (aspartate 328) is a topological domain, lumenal.

Belongs to the ZIP transporter (TC 2.A.5) family. Homodimer.

It is found in the golgi apparatus membrane. It localises to the cytoplasmic vesicle membrane. The protein resides in the endoplasmic reticulum membrane. It carries out the reaction Zn(2+)(in) = Zn(2+)(out). Functions as a zinc transporter transporting Zn(2+) from the Golgi apparatus to the cytosol and thus influences the zinc level at least in areas of the cytosol. May regulate beige adipocyte differentiation. This is Zinc transporter ZIP13 from Pongo abelii (Sumatran orangutan).